The following is a 315-amino-acid chain: Porphobilinogen deaminase (315 aa).

Cys241 carries the S-(dipyrrolylmethanemethyl)cysteine modification.

Belongs to the HMBS family. Monomer. It depends on dipyrromethane as a cofactor.

The catalysed reaction is 4 porphobilinogen + H2O = hydroxymethylbilane + 4 NH4(+). Its pathway is porphyrin-containing compound metabolism; protoporphyrin-IX biosynthesis; coproporphyrinogen-III from 5-aminolevulinate: step 2/4. Tetrapolymerization of the monopyrrole PBG into the hydroxymethylbilane pre-uroporphyrinogen in several discrete steps. This Nitratidesulfovibrio vulgaris (strain ATCC 29579 / DSM 644 / CCUG 34227 / NCIMB 8303 / VKM B-1760 / Hildenborough) (Desulfovibrio vulgaris) protein is Porphobilinogen deaminase.